A 91-amino-acid polypeptide reads, in one-letter code: Small ribosomal subunit protein bS16 (91 aa).

Belongs to the bacterial ribosomal protein bS16 family. As to quaternary structure, part of the 30S ribosomal subunit.

Binds to the lower part of the body of the 30S subunit, where it stabilizes two of its domains. In Thermus thermophilus, this protein is Small ribosomal subunit protein bS16.